Consider the following 235-residue polypeptide: Probable queuosine precursor transporter (235 aa).

Transmembrane regions (helical) follow at residues 17–37 (IIWL…FVQI), 56–76 (FHST…DLTV), 87–107 (IIFV…VLFS), 127–147 (IAIA…IVFN), 155–175 (WWVA…FVFF), and 201–221 (FKLF…LNVI).

This sequence belongs to the vitamin uptake transporter (VUT/ECF) (TC 2.A.88) family. Q precursor transporter subfamily.

It is found in the cell inner membrane. Its function is as follows. Involved in the import of queuosine (Q) precursors, required for Q precursor salvage. The polypeptide is Probable queuosine precursor transporter (Haemophilus influenzae (strain ATCC 51907 / DSM 11121 / KW20 / Rd)).